We begin with the raw amino-acid sequence, 569 residues long: Glutamate--tRNA ligase, chloroplastic/mitochondrial (569 aa).

59 to 61 provides a ligand contact to L-glutamate; that stretch reads RFA. A 'HIGH' region motif is present at residues 62 to 72; it reads PSPTGNLHVGG. Histidine 69 serves as a coordination point for ATP. Residues glutamate 95, 247-251, and arginine 265 each bind L-glutamate; that span reads YNFCV. Residues glutamate 268 and 303-307 each bind ATP; that span reads KLSKR. A 'KMSKS' region motif is present at residues 303-307; it reads KLSKR.

The protein belongs to the class-I aminoacyl-tRNA synthetase family. Glutamate--tRNA ligase type 1 subfamily.

The protein localises to the plastid. It localises to the chloroplast. Its subcellular location is the mitochondrion. It catalyses the reaction tRNA(Glu) + L-glutamate + ATP = L-glutamyl-tRNA(Glu) + AMP + diphosphate. In terms of biological role, catalyzes the attachment of glutamate to tRNA(Glu) in a two-step reaction: glutamate is first activated by ATP to form Glu-AMP and then transferred to the acceptor end of tRNA(Glu). This is Glutamate--tRNA ligase, chloroplastic/mitochondrial from Nicotiana tabacum (Common tobacco).